Reading from the N-terminus, the 446-residue chain is D(1A) dopamine receptor (446 aa).

Residues 1–22 are Extracellular-facing; it reads MPLNDTTMDRRGLVVERDFSFR. N4 carries an N-linked (GlcNAc...) asparagine glycan. A helical transmembrane segment spans residues 23-48; that stretch reads ILTACFLSLLILSTLLGNTLVCAAVI. The Cytoplasmic segment spans residues 49 to 59; that stretch reads RFRHLRSKVTN. A helical membrane pass occupies residues 60-86; that stretch reads FFVISLAVSDLLVAVLVMPWKAVAEIA. Topologically, residues 87–95 are extracellular; that stretch reads GFWPFGSFC. C95 and C185 are oxidised to a cystine. A helical transmembrane segment spans residues 96–118; that stretch reads NIWVAFDIMCSTASILNLCVISV. The Cytoplasmic segment spans residues 119–137; the sequence is DRYWAISSPFRYERKMTPK. Residues 138–162 traverse the membrane as a helical segment; that stretch reads AAFILISVAWTLSVLISFIPVQLNW. The Extracellular portion of the chain corresponds to 163-191; sequence HKARPLSSPDGNVSSQDETMDNCDSSLSR. A helical transmembrane segment spans residues 192–217; sequence TYAISSSLISFYIPVAIMIVTYTRIY. Residues 218 to 271 lie on the Cytoplasmic side of the membrane; it reads RIAQKQIRRISALERAAVHAKNCQNTTGNGANVECSQPESSFKMSFKRETKVLK. The chain crosses the membrane as a helical span at residues 272-298; the sequence is TLSVIMGVFVCCWLPFFILNCMVPFCE. At 299–315 the chain is on the extracellular side; it reads SDLPSGETKPFCIDSIT. Residues 316-340 form a helical membrane-spanning segment; that stretch reads FDVFVWFGWANSSLNPIIYAFNADF. Topologically, residues 341–446 are cytoplasmic; that stretch reads RKAFSTLLGC…PITQNGQHKT (106 aa). 2 S-palmitoyl cysteine lipidation sites follow: C350 and C354.

The protein belongs to the G-protein coupled receptor 1 family. Interacts with DNAJC14 via its C-terminus.

The protein localises to the cell membrane. It localises to the endoplasmic reticulum membrane. The protein resides in the cell projection. It is found in the cilium membrane. Its subcellular location is the dendrite. The protein localises to the dendritic spine. Functionally, this is one of the five types (D1 to D5) of receptors for dopamine. The activity of this receptor is mediated by G proteins which activate adenylyl cyclase. The polypeptide is D(1A) dopamine receptor (DRD1) (Didelphis virginiana (North American opossum)).